Reading from the N-terminus, the 246-residue chain is N-alpha-acetyltransferase 11 (246 aa).

The segment at 1–58 (MNIRNARPEDLMNMQHCNLLCLPENYQMKYYFYHGLSWPQLSYIAEDEDGKIVGYVLA) is interaction with NAA15. The N-acetyltransferase domain maps to 1–152 (MNIRNARPED…DAYAMKRDLA (152 aa)). The interval 175 to 246 (EENQEAQDST…DSSEYLDSTS (72 aa)) is disordered. Residues 230–246 (SHSTDVQDSSEYLDSTS) show a composition bias toward polar residues.

This sequence belongs to the acetyltransferase family. ARD1 subfamily. Component of the N-terminal acetyltransferase A (NatA) complex composed of NAA11 and NAA15. Interacts with HIF1A.

The protein resides in the cytoplasm. It is found in the nucleus. It carries out the reaction N-terminal glycyl-[protein] + acetyl-CoA = N-terminal N(alpha)-acetylglycyl-[protein] + CoA + H(+). It catalyses the reaction N-terminal L-alanyl-[protein] + acetyl-CoA = N-terminal N(alpha)-acetyl-L-alanyl-[protein] + CoA + H(+). The catalysed reaction is N-terminal L-seryl-[protein] + acetyl-CoA = N-terminal N(alpha)-acetyl-L-seryl-[protein] + CoA + H(+). The enzyme catalyses N-terminal L-valyl-[protein] + acetyl-CoA = N-terminal N(alpha)-acetyl-L-valyl-[protein] + CoA + H(+). It carries out the reaction N-terminal L-cysteinyl-[protein] + acetyl-CoA = N-terminal N(alpha)-acetyl-L-cysteinyl-[protein] + CoA + H(+). It catalyses the reaction N-terminal L-threonyl-[protein] + acetyl-CoA = N-terminal N(alpha)-acetyl-L-threonyl-[protein] + CoA + H(+). In terms of biological role, displays alpha (N-terminal) acetyltransferase activity. Proposed alternative catalytic subunit of the N-terminal acetyltransferase A (NatA) complex. This Rattus norvegicus (Rat) protein is N-alpha-acetyltransferase 11 (Naa11).